We begin with the raw amino-acid sequence, 250 residues long: Eukaryotic translation initiation factor 2 subunit 2 (250 aa).

A C4-type zinc finger spans residues 193-217; that stretch reads CHTCKSPETQLTKDTRLFFLQCTNC.

Belongs to the eIF-2-beta/eIF-5 family. Eukaryotic translation initiation factor 2 eIF2 is a heterotrimeric complex composed of an alpha, a beta and a gamma subunit.

It is found in the cytoplasm. Its subcellular location is the cytosol. Component of the eIF2 complex that functions in the early steps of protein synthesis by forming a ternary complex with GTP and initiator tRNA. This complex binds to a 40S ribosomal subunit, followed by mRNA binding to form a 43S pre-initiation complex (43S PIC). Junction of the 60S ribosomal subunit to form the 80S initiation complex is preceded by hydrolysis of the GTP bound to eIF2 and release of an eIF2-GDP binary complex. In order for eIF2 to recycle and catalyze another round of initiation, the GDP bound to eIF2 must exchange with GTP by way of a reaction catalyzed by eIF2B. The sequence is that of Eukaryotic translation initiation factor 2 subunit 2 from Caenorhabditis elegans.